The chain runs to 246 residues: Probable transcriptional regulatory protein HSM_1763 (246 aa).

It belongs to the TACO1 family.

Its subcellular location is the cytoplasm. This chain is Probable transcriptional regulatory protein HSM_1763, found in Histophilus somni (strain 2336) (Haemophilus somnus).